The primary structure comprises 348 residues: 3-isopropylmalate dehydrogenase (348 aa).

G76 to E87 serves as a coordination point for NAD(+). Substrate is bound by residues R94, R104, R132, and D217. 3 residues coordinate Mg(2+): D217, D241, and D245. G275–N287 serves as a coordination point for NAD(+).

The protein belongs to the isocitrate and isopropylmalate dehydrogenases family. LeuB type 1 subfamily. As to quaternary structure, homodimer. Requires Mg(2+) as cofactor. Mn(2+) serves as cofactor.

The protein resides in the cytoplasm. The catalysed reaction is (2R,3S)-3-isopropylmalate + NAD(+) = 4-methyl-2-oxopentanoate + CO2 + NADH. Its pathway is amino-acid biosynthesis; L-leucine biosynthesis; L-leucine from 3-methyl-2-oxobutanoate: step 3/4. In terms of biological role, catalyzes the oxidation of 3-carboxy-2-hydroxy-4-methylpentanoate (3-isopropylmalate) to 3-carboxy-4-methyl-2-oxopentanoate. The product decarboxylates to 4-methyl-2 oxopentanoate. The chain is 3-isopropylmalate dehydrogenase from Staphylococcus aureus (strain bovine RF122 / ET3-1).